The sequence spans 603 residues: MDRGSLLPFQLWCPRPFSKYSQNQPRPPSATLKPPVCPDTSSGTEPDHRPAHLESTPPALAAEAPTSQHAPLLSTAASGDEGRVLLDTWYVIKPGNTKEKVAFFVAHQCGGGSRASSMKVKGHWGSDSSKAKRRRRCLEPTKAPPDQGGQEGTPATEVAPTSSGDDVDLLSVAEMVALVEQRAALALQSYPRPSTPAPVVFVSAEQGGPAKGLGSERRSGGGDCSRVAEAVAHFEAQRDSPPTKGLRKEERPGPGPGEVRIAFRISNVREPQSPDGSLANGGGGRPACPYPGSPGPGTRAKDKITCDLYQLISPSRDALPSNVEFLLARADEASEGETPAPARPEDTPPAPPPPPARDCGASGFHVDVVVTGVVDACIFFGKDGTKNVKEETVCLTVSPEEPPPPGQLFFLQSRGPEGPPEPPPADTASKVPGPEDSEGTTDTSLCRLYRHVSHDFLEIRFKIQRLLEPRQYMLLLPEHVLVKIFSFLPTRALAALKCTCHHFKGIIEAFGVRATDSRWSRDPLYRDDPCKQCRKRYEKGDVSLCRWHPKPYHHDLPYGRSYWMCCRRADRETPGCRLGLHDNNWVLPCNGVGGGRAGREEGR.

A disordered region spans residues 20–54 (YSQNQPRPPSATLKPPVCPDTSSGTEPDHRPAHLE). Phosphoserine is present on residues serine 21 and serine 67. Disordered regions lie at residues 111-163 (GGSR…PTSS), 235-301 (EAQR…TRAK), 332-359 (EASE…ARDC), and 396-442 (TVSP…GTTD). The residue at position 347 (threonine 347) is a Phosphothreonine. Residues 347–356 (TPPAPPPPPA) are compositionally biased toward pro residues. The 53-residue stretch at 470–522 (RQYMLLLPEHVLVKIFSFLPTRALAALKCTCHHFKGIIEAFGVRATDSRWSRD) folds into the F-box domain.

As to quaternary structure, part of a SCF (SKP1-cullin-F-box) protein ligase complex SCF(FBXO46) composed of CUL1, SKP1, RBX1 and FBXO46. Phosphorylated by ATM in response to DNA damage, promoting ubiquitination and degradation by the SCF(FBXO31) complex. Post-translationally, ATM-phosphorylated FBXO46 is ubiquitinated and degradaded by the SCF(FBXO31) complex in response to DNA damage.

The protein operates within protein modification; protein ubiquitination. Substrate-recognition component of the SCF(FBXO46) protein ligase complex, which mediates the ubiquitination and degradation of target proteins. In absence of stress, the SCF(FBXO46) complex catalyzes ubiquitination and degradation of MTOR-phosphorylated FBXO31. This Rattus norvegicus (Rat) protein is F-box only protein 46 (Fbxo46).